A 396-amino-acid polypeptide reads, in one-letter code: Gap junction gamma-1 protein (396 aa).

The Cytoplasmic segment spans residues 1–18 (MSWSFLTRLLEEIHNHST). Residues 19–39 (FVGKIWLTVLIVFRIVLTAVG) form a helical membrane-spanning segment. Residues 40–75 (GESIYYDEQSKFVCNTEQPGCENVCYDAFAPLSHVR) lie on the Extracellular side of the membrane. Residues 76 to 96 (FWVFQIILVATPSVMYLGYAI) form a helical membrane-spanning segment. Topologically, residues 97-175 (HKIAKMEHGE…RRIREDGLMK (79 aa)) are cytoplasmic. A disordered region spans residues 145-165 (ELESEKENKEQSQPKPKHDGR). Basic and acidic residues predominate over residues 147–156 (ESEKENKEQS). Residues 176–198 (IYVLQLLARTVFEVGFLIGQYFL) traverse the membrane as a helical segment. Residues 199-229 (YGFQVHPFYVCSRLPCPHKIDCFISRPTEKT) are Extracellular-facing. The chain crosses the membrane as a helical span at residues 230–250 (IFLLIMYGVTGLCLLLNIWEM). At 251–396 (LHLGFGTIRD…SGDGKTSVWI (146 aa)) the chain is on the cytoplasmic side. Residues 303–358 (ELSNAKIAYKQNKANIAQEQQYGSHEEHLPADLETLQREIRMAQERLDLAIQAYHH) adopt a coiled-coil conformation. Residues 357–396 (HHQNNPHGPREKKAKVGSKSGSNKSSISSKSGDGKTSVWI) form a disordered region. A compositionally biased stretch (low complexity) spans 373 to 396 (GSKSGSNKSSISSKSGDGKTSVWI).

Belongs to the connexin family. Gamma-type subfamily. As to quaternary structure, a connexon is composed of a hexamer of connexins. Interacts with CNST.

It localises to the cell membrane. The protein resides in the cell junction. It is found in the gap junction. Functionally, one gap junction consists of a cluster of closely packed pairs of transmembrane channels, the connexons, through which materials of low MW diffuse from one cell to a neighboring cell. The chain is Gap junction gamma-1 protein (GJC1) from Cricetulus griseus (Chinese hamster).